We begin with the raw amino-acid sequence, 551 residues long: Solute carrier family 22 member 13 (551 aa).

Residues 1-20 (MAQFVQVLAEIGDFGRFQIQ) are Cytoplasmic-facing. The chain crosses the membrane as a helical span at residues 21–41 (LLILLCVLNFLSPFYFFAHVF). Residues 42 to 138 (MVLDEPHHCA…LVCDRKHLKD (97 aa)) lie on the Extracellular side of the membrane. Residues N57, N61, N92, and N104 are each glycosylated (N-linked (GlcNAc...) asparagine). The helical transmembrane segment at 139 to 159 (TTQSVFMAGLLVGTLMFGPLC) threads the bilayer. Residues 160–167 (DRIGRKAT) lie on the Cytoplasmic side of the membrane. The helical transmembrane segment at 168-188 (ILAQLLLFTLIGLATAFVPSF) threads the bilayer. The Extracellular segment spans residues 189 to 195 (ELYMALR). Residues 196–216 (FAVATAVAGLSFSNVTLLTEW) form a helical membrane-spanning segment. At 217–224 (VGPSWRTQ) the chain is on the cytoplasmic side. Residues 225 to 245 (AVVLAQCNFSLGQMVLAGLAY) form a helical membrane-spanning segment. Residues 246 to 251 (GFRNWR) are Extracellular-facing. Residues 252 to 272 (LLQITGTAPGLLLFFYFWALP) traverse the membrane as a helical segment. The Cytoplasmic segment spans residues 273–332 (ESARWLLTRGRMDEAIQLIQKAASVNRRKLSPELMNQLVPEKTGPSGNALDLFRHPQLRK). The helical transmembrane segment at 333 to 353 (VTLIIFCVWFVDSLGYYGLSL) threads the bilayer. Q354 is a topological domain (extracellular). A helical transmembrane segment spans residues 355 to 375 (VGDFGLDVYLTQLIFGAVEVP). Residues 376-397 (ARCSSIFMMQRFGRKWSQLGTL) are Cytoplasmic-facing. A helical transmembrane segment spans residues 398 to 418 (VLGGLMCIIIIFIPADLPVVV). Over 419-427 (TMLAVVGKM) the chain is Extracellular. Residues 428-448 (ATAAAFTISYVYSAELFPTIL) traverse the membrane as a helical segment. Topologically, residues 449–452 (RQTG) are cytoplasmic. Residues 453–473 (MGLVGIFSRIGGILTPLVILL) traverse the membrane as a helical segment. At 474–478 (GEYHA) the chain is on the extracellular side. A helical membrane pass occupies residues 479-499 (ALPMLIYGSLPIVAGLLCTLL). Over 500–551 (PETHGQGLKDTLQDLELGPHPRSPKSVPSEKETEAKGRTSSPGVAFVSSTYF) the chain is Cytoplasmic. The disordered stretch occupies residues 511 to 551 (LQDLELGPHPRSPKSVPSEKETEAKGRTSSPGVAFVSSTYF). The segment covering 527–536 (PSEKETEAKG) has biased composition (basic and acidic residues). Polar residues predominate over residues 537–551 (RTSSPGVAFVSSTYF).

Belongs to the major facilitator (TC 2.A.1) superfamily. Organic cation transporter (TC 2.A.1.19) family. In terms of processing, glycosylated. Ubiquitous. Highly expressed in kidneys and to a weaker extent in brain, heart, and intestine. In kidneys, expressed in proximal convoluted tubule. In kidneys, also expressed in cortical collecting duct, whereas glomerulus and thick ascending limb exhibit no expression.

The protein localises to the apical cell membrane. It carries out the reaction urate(out) + (S)-lactate(in) = urate(in) + (S)-lactate(out). The catalysed reaction is urate(out) + succinate(in) = urate(in) + succinate(out). It catalyses the reaction urate(out) + glutathione(in) = urate(in) + glutathione(out). The enzyme catalyses nicotinate(in) + urate(out) = nicotinate(out) + urate(in). It carries out the reaction orotate(out) + a carboxylate(in) = orotate(in) + a carboxylate(out). In terms of biological role, anion antiporter that mediates the transport of urate, orotate and nicotinate in exchange for organic or inorganic anions. Translocates urate and orotate across the apical membrane of proximal tubule epithelial cells and involved in urate renal reabsorption. Possibly involved in orotate renal reabsorption and nicotinate intestinal reabsorption. Mediates urate uptake by an exchange with organic anions such as (S)-lactate, succinate, glutathione and nicotinate. Urate and orotate transports are Cl(-)-dependent. Shows similar transport characteristics as the urate/orotate renal antiporter SLC22A12/URAT1 and may act as a compensator of SLC22A12/URAT1 in certain conditions. This Homo sapiens (Human) protein is Solute carrier family 22 member 13.